Here is a 248-residue protein sequence, read N- to C-terminus: MPPILILLTLLLPLRAGAEEIIGGHEVKPHSRPYMARVRFVKDNGKRHSCGGFLVQDYFVLTAAHCTGSSMRVILGAHNIRAKEETQQIIPVAKAIPHPAYDDKDNTSDIMLLKLESKAKRTKAVRPLKLPRPNARVKPGHVCSVAGWGRTSINATQRSSCLREAQLIIQKDKECKKYFYKYFKTMQICAGDPKKIQSTYSGDSGGPLVCNNKAYGVLTYGLNRTIGPGVFTKVVHYLPWISRNMKLL.

The signal sequence occupies residues 1–18 (MPPILILLTLLLPLRAGA). The propeptide occupies 19 to 20 (EE). One can recognise a Peptidase S1 domain in the interval 21–246 (IIGGHEVKPH…YLPWISRNMK (226 aa)). A disulfide bridge links Cys50 with Cys66. The Charge relay system role is filled by His65. Asn106 carries N-linked (GlcNAc...) asparagine glycosylation. Asp109 acts as the Charge relay system in catalysis. 2 cysteine pairs are disulfide-bonded: Cys143-Cys210 and Cys175-Cys189. Residue Asn154 is glycosylated (N-linked (GlcNAc...) asparagine). Ser204 (charge relay system) is an active-site residue. Asn223 carries N-linked (GlcNAc...) asparagine glycosylation.

It belongs to the peptidase S1 family. Granzyme subfamily.

It is found in the cytolytic granule. This enzyme is probably necessary for target cell lysis in cell-mediated immune responses. In Mus musculus (Mouse), this protein is Granzyme F (Gzmf).